The following is a 449-amino-acid chain: Glycoprotein endo-alpha-1,2-mannosidase (449 aa).

Over 1-8 (MIRFRRRT) the chain is Cytoplasmic. The chain crosses the membrane as a helical; Signal-anchor for type II membrane protein span at residues 9–29 (CITLSIFIFLVCLIMAGLKHL). Residues 30 to 449 (RPENAAFGSP…YMKEKEHWLV (420 aa)) are Lumenal-facing. Positions 59–449 (DSENHLKGNT…YMKEKEHWLV (391 aa)) are catalytic.

This sequence belongs to the glycosyl hydrolase 99 family.

The protein localises to the golgi apparatus membrane. The enzyme catalyses N-{alpha-Glc-(1-&gt;3)-alpha-Man-(1-&gt;2)-alpha-Man-(1-&gt;2)-alpha-Man-(1-&gt;3)-[alpha-Man-(1-&gt;2)-alpha-Man-(1-&gt;3)-[alpha-Man-(1-&gt;2)-alpha-Man-(1-&gt;6)]-alpha-Man-(1-&gt;6)]-beta-Man-(1-&gt;4)-beta-GlcNAc-(1-&gt;4)-beta-GlcNAc}-L-asparaginyl-[protein] + H2O = alpha-D-glucosyl-(1-&gt;3)-D-mannopyranose + N(4)-{alpha-D-Man-(1-&gt;2)-alpha-D-Man-(1-&gt;3)-[alpha-D-Man-(1-&gt;2)-alpha-D-Man-(1-&gt;3)-[alpha-D-Man-(1-&gt;2)-alpha-D-Man-(1-&gt;6)]-alpha-D-Man-(1-&gt;6)]-beta-D-Man-(1-&gt;4)-beta-D-GlaNAc-(1-&gt;4)-beta-D-GlcNAc}-L-asparaginyl-[protein] (N-glucan mannose isomer 8A1,2,3B1,2). The polypeptide is Glycoprotein endo-alpha-1,2-mannosidase (manea) (Xenopus laevis (African clawed frog)).